Reading from the N-terminus, the 106-residue chain is Movement protein TGB2 (106 aa).

Residues 1–9 (MPLTPPPDH) lie on the Cytoplasmic side of the membrane. A helical transmembrane segment spans residues 10 to 30 (TKVLLVAAIGLSIVASILTYS). Over 31–71 (RNTLPQVGDHSHLLPHGGVYKDGTKTIVYGGPRKLNSLEGG) the chain is Lumenal. The chain crosses the membrane as a helical span at residues 72-92 (FNLPVQPWFLVILLSAAIFLL). Residues 93-106 (SCRSGHRRVCGQCH) are Cytoplasmic-facing.

It belongs to the Tymovirales TGBp2 protein family.

It localises to the host endoplasmic reticulum membrane. Plays a role in viral cell-to-cell propagation, by facilitating genome transport to neighboring plant cells through plasmosdesmata,. This Chrysanthemum morifolium (Florist's daisy) protein is Movement protein TGB2.